The following is a 563-amino-acid chain: GTPase Obg (563 aa).

In terms of domain architecture, Obg spans 2 to 168; sequence SDFVDRVTVH…RDVILELKSI (167 aa). Residues 169 to 349 enclose the OBG-type G domain; it reads ADVALVGFPS…LNFALSALVH (181 aa). GTP is bound by residues 175–182, 200–204, 221–224, 301–304, and 330–332; these read GFPSAGKS, FTTLV, DVPG, NKID, and STA. Mg(2+)-binding residues include serine 182 and threonine 202. One can recognise an OCT domain in the interval 383 to 469; the sequence is DEGGSALEFT…ARMVEFDWDP (87 aa). 2 disordered regions span residues 478–509 and 528–563; these read LDGS…ERRA and ERKA…ETEE. Over residues 486-509 the composition is skewed to basic and acidic residues; sequence RGKDLRLEEQDPRTHRRSNAERRA.

It belongs to the TRAFAC class OBG-HflX-like GTPase superfamily. OBG GTPase family. As to quaternary structure, monomer. The cofactor is Mg(2+).

Its subcellular location is the cytoplasm. Functionally, an essential GTPase which binds GTP, GDP and possibly (p)ppGpp with moderate affinity, with high nucleotide exchange rates and a fairly low GTP hydrolysis rate. Plays a role in control of the cell cycle, stress response, ribosome biogenesis and in those bacteria that undergo differentiation, in morphogenesis control. The chain is GTPase Obg from Bifidobacterium longum subsp. infantis (strain ATCC 15697 / DSM 20088 / JCM 1222 / NCTC 11817 / S12).